We begin with the raw amino-acid sequence, 89 residues long: Small ribosomal subunit protein bS20 (89 aa).

It belongs to the bacterial ribosomal protein bS20 family.

Its function is as follows. Binds directly to 16S ribosomal RNA. This chain is Small ribosomal subunit protein bS20, found in Helicobacter pylori (strain Shi470).